A 392-amino-acid chain; its full sequence is Probable protein phosphatase 2C 22 (392 aa).

A disordered region spans residues 1-26; that stretch reads MEETRGISDPENGSSSYGGKPPNPLS. In terms of domain architecture, PPM-type phosphatase spans 89-356; that stretch reads RSGAWSDIGS…DNVTAVVVCL (268 aa). Positions 133, 134, 304, and 347 each coordinate Mn(2+).

Belongs to the PP2C family. The cofactor is Mg(2+). Mn(2+) is required as a cofactor.

It carries out the reaction O-phospho-L-seryl-[protein] + H2O = L-seryl-[protein] + phosphate. The enzyme catalyses O-phospho-L-threonyl-[protein] + H2O = L-threonyl-[protein] + phosphate. The sequence is that of Probable protein phosphatase 2C 22 from Arabidopsis thaliana (Mouse-ear cress).